The sequence spans 205 residues: Golgi apparatus membrane protein TVP23 homolog B (205 aa).

M1 carries the N-acetylmethionine modification. Residues 1 to 21 (MLSQDSNDDTEDVSLFDAEEE) show a composition bias toward acidic residues. A disordered region spans residues 1 to 27 (MLSQDSNDDTEDVSLFDAEEETTNRPR). 4 helical membrane passes run 34–53 (PVAS…VYLL), 54–72 (CELL…ILLL), 126–146 (IFWL…FSAL), and 152–172 (KWLA…YGYI).

Belongs to the TVP23 family.

It localises to the membrane. This Mus musculus (Mouse) protein is Golgi apparatus membrane protein TVP23 homolog B (Tvp23b).